Here is a 509-residue protein sequence, read N- to C-terminus: Maturase K (509 aa).

Belongs to the intron maturase 2 family. MatK subfamily.

The protein localises to the plastid. Its subcellular location is the chloroplast. Its function is as follows. Usually encoded in the trnK tRNA gene intron. Probably assists in splicing its own and other chloroplast group II introns. In Clematis ligusticifolia (Western white clematis), this protein is Maturase K.